We begin with the raw amino-acid sequence, 84 residues long: Mu-Sparatoxin-Hp1 (84 aa).

A signal peptide spans 1–20; that stretch reads MKIAIVMTLLLVAFSTASFA. The propeptide occupies 21 to 35; that stretch reads IEPIERAALDLVMAR. Intrachain disulfides connect Cys54–Cys68, Cys61–Cys73, and Cys67–Cys78. Leucine amide is present on Leu82.

In terms of tissue distribution, expressed by the venom gland.

It localises to the secreted. Its function is as follows. Weakly nhibits voltage-gated sodium channels Nav1.7/SCN9A. High concentration of the toxin (3 uM) inhibits Nav1.7/SCN9A currents by 79%. The chain is Mu-Sparatoxin-Hp1 from Heteropoda pingtungensis (Pingtung huntsman spider).